Here is a 262-residue protein sequence, read N- to C-terminus: Tetratricopeptide repeat protein 33 (262 aa).

The tract at residues 17 to 63 (ATSQQFEAEAADEKDAAENEDGNWLQASKRRKETLQEGCKQRSQQLK) is disordered. TPR repeat units lie at residues 59-92 (SQQL…TPGD), 93-126 (ATLY…NPHS), and 127-160 (WEAW…YPMN). Serine 197 carries the phosphoserine modification.

This Mus musculus (Mouse) protein is Tetratricopeptide repeat protein 33 (Ttc33).